The following is a 397-amino-acid chain: S-adenosylmethionine synthase (397 aa).

His16 contributes to the ATP binding site. Asp18 contacts Mg(2+). A K(+)-binding site is contributed by Glu44. L-methionine-binding residues include Glu57 and Gln100. The segment at 100–110 (QSPDIAQGVNE) is flexible loop. ATP-binding positions include 175-177 (DAK), 242-243 (RF), Asp251, 257-258 (RK), Ala274, and Lys278. Asp251 serves as a coordination point for L-methionine. L-methionine is bound at residue Lys282.

This sequence belongs to the AdoMet synthase family. As to quaternary structure, homotetramer; dimer of dimers. It depends on Mg(2+) as a cofactor. K(+) serves as cofactor.

It localises to the cytoplasm. The enzyme catalyses L-methionine + ATP + H2O = S-adenosyl-L-methionine + phosphate + diphosphate. Its pathway is amino-acid biosynthesis; S-adenosyl-L-methionine biosynthesis; S-adenosyl-L-methionine from L-methionine: step 1/1. In terms of biological role, catalyzes the formation of S-adenosylmethionine (AdoMet) from methionine and ATP. The overall synthetic reaction is composed of two sequential steps, AdoMet formation and the subsequent tripolyphosphate hydrolysis which occurs prior to release of AdoMet from the enzyme. This chain is S-adenosylmethionine synthase, found in Streptococcus thermophilus (strain CNRZ 1066).